The following is a 167-amino-acid chain: Chorion class CB protein PC404 (167 aa).

A left arm region spans residues 1 to 55; the sequence is IGREAIVGAGLQGPFGGPWPYDALSPFDMPYGPALPAMSCGAGSFGPSSGFAPAA. Positions 56-126 are central domain; the sequence is AYGGGLAVTS…GDGAVGIVAE (71 aa). Residues 127-167 are right arm; it reads TPFASTSVNPAYGYGGAIGGGVPYNSYGPIGYGGCGYNALY.

This sequence belongs to the chorion protein family.

This protein is one of many from the eggshell of the silk moth. The protein is Chorion class CB protein PC404 of Antheraea polyphemus (Polyphemus moth).